A 602-amino-acid polypeptide reads, in one-letter code: (R)-limonene synthase (602 aa).

The Mg(2+) site is built by Asp-356, Asp-360, Asp-500, Thr-504, and Glu-508. Residues 356–360 carry the DDXXD motif motif; the sequence is DDVYD.

Belongs to the terpene synthase family. It depends on Mg(2+) as a cofactor. Requires Mn(2+) as cofactor.

The catalysed reaction is (2E)-geranyl diphosphate = (4R)-limonene + diphosphate. Functionally, catalyzes the formation of (R)-(+)-limonene, terpinolene, (1R,5S)-(+)-camphene, (1R,5R)-(+)-alpha-pinene, beta-myrcene and traces of alpha-phellandrene. This chain is (R)-limonene synthase, found in Lavandula angustifolia (Lavender).